The chain runs to 260 residues: Small ribosomal subunit protein uS2 (260 aa).

Residues 223–260 (EGRQGEDEEEASQEVAEGVSKDSLEDLKKSVEEGSNEE) are disordered. Over residues 241–254 (VSKDSLEDLKKSVE) the composition is skewed to basic and acidic residues.

This sequence belongs to the universal ribosomal protein uS2 family.

The protein is Small ribosomal subunit protein uS2 of Pediococcus pentosaceus (strain ATCC 25745 / CCUG 21536 / LMG 10740 / 183-1w).